The chain runs to 559 residues: (R)-mandelonitrile lyase 1 (559 aa).

The first 27 residues, 1–27 (MEKSTMSVILFVLHLLVLHLQYSEVHS), serve as a signal peptide directing secretion. N-linked (GlcNAc...) asparagine glycans are attached at residues N30 and N44. Residues 63–64 (TS), 82–83 (ER), T133, and 137–140 (NAGV) each bind FAD. Residues N145, N162, N178, and N218 are each glycosylated (N-linked (GlcNAc...) asparagine). Position 244 (V244) interacts with FAD. Residues N252, N255, N309, N380, N402, N420, and N467 are each glycosylated (N-linked (GlcNAc...) asparagine). A disulfide bridge connects residues C427 and C478. Y485 is a substrate binding site. FAD is bound at residue 486–487 (WH). H487 functions as the Proton donor in the catalytic mechanism. The active-site Proton acceptor is H525. 526-527 (PQ) provides a ligand contact to FAD.

This sequence belongs to the GMC oxidoreductase family. Monomer. It depends on FAD as a cofactor.

It carries out the reaction (R)-mandelonitrile = benzaldehyde + hydrogen cyanide. Its function is as follows. Involved in cyanogenesis, the release of HCN from injured tissues. Catalyzes the stereospecific addition of HCN to a variety of aldehydes in vitro. It is a major seed constituent, and could have the additional role of a storage form for reduced nitrogen. The polypeptide is (R)-mandelonitrile lyase 1 (MDL1) (Prunus dulcis (Almond)).